The chain runs to 1438 residues: DNA-directed RNA polymerase subunit beta' (1438 aa).

The Zn(2+) site is built by Cys-70, Cys-72, Cys-85, and Cys-88. Residues Asp-461, Asp-463, and Asp-465 each contribute to the Mg(2+) site. Zn(2+)-binding residues include Cys-821, Cys-895, Cys-902, and Cys-905. Residues 1413–1427 (DAMAAAMGGDSAGGD) show a composition bias toward low complexity. The disordered stretch occupies residues 1413 to 1438 (DAMAAAMGGDSAGGDTKPEAPEASEE).

Belongs to the RNA polymerase beta' chain family. As to quaternary structure, the RNAP catalytic core consists of 2 alpha, 1 beta, 1 beta' and 1 omega subunit. When a sigma factor is associated with the core the holoenzyme is formed, which can initiate transcription. Requires Mg(2+) as cofactor. It depends on Zn(2+) as a cofactor.

It carries out the reaction RNA(n) + a ribonucleoside 5'-triphosphate = RNA(n+1) + diphosphate. In terms of biological role, DNA-dependent RNA polymerase catalyzes the transcription of DNA into RNA using the four ribonucleoside triphosphates as substrates. The sequence is that of DNA-directed RNA polymerase subunit beta' from Erythrobacter litoralis (strain HTCC2594).